The following is a 311-amino-acid chain: 4-diphosphocytidyl-2-C-methyl-D-erythritol kinase (311 aa).

Lys-16 is a catalytic residue. ATP is bound at residue 101-111 (PVAGGMAGGSA). Asp-143 is an active-site residue.

The protein belongs to the GHMP kinase family. IspE subfamily.

It carries out the reaction 4-CDP-2-C-methyl-D-erythritol + ATP = 4-CDP-2-C-methyl-D-erythritol 2-phosphate + ADP + H(+). It functions in the pathway isoprenoid biosynthesis; isopentenyl diphosphate biosynthesis via DXP pathway; isopentenyl diphosphate from 1-deoxy-D-xylulose 5-phosphate: step 3/6. In terms of biological role, catalyzes the phosphorylation of the position 2 hydroxy group of 4-diphosphocytidyl-2C-methyl-D-erythritol. The polypeptide is 4-diphosphocytidyl-2-C-methyl-D-erythritol kinase (Rhodococcus jostii (strain RHA1)).